Consider the following 177-residue polypeptide: Large ribosomal subunit protein uL6 (177 aa).

This sequence belongs to the universal ribosomal protein uL6 family. As to quaternary structure, part of the 50S ribosomal subunit.

This protein binds to the 23S rRNA, and is important in its secondary structure. It is located near the subunit interface in the base of the L7/L12 stalk, and near the tRNA binding site of the peptidyltransferase center. This Chromobacterium violaceum (strain ATCC 12472 / DSM 30191 / JCM 1249 / CCUG 213 / NBRC 12614 / NCIMB 9131 / NCTC 9757 / MK) protein is Large ribosomal subunit protein uL6.